A 657-amino-acid polypeptide reads, in one-letter code: UvrABC system protein B (657 aa).

The 158-residue stretch at 25–182 folds into the Helicase ATP-binding domain; the sequence is NSIKSNNRAQ…KKLIEIQYER (158 aa). An ATP-binding site is contributed by 38–45; the sequence is GVTGSGKT. The short motif at 91–114 is the Beta-hairpin element; sequence YYDYYQPEAYVPQTDTFIEKDASI. A Helicase C-terminal domain is found at 429–595; the sequence is QIDDLYGEIN…TIIKDVRDII (167 aa). The region spanning 621–656 is the UVR domain; sequence DKLIKDLTEEMLLAAKNLQFERAAELRDIINEIKDG.

Belongs to the UvrB family. Forms a heterotetramer with UvrA during the search for lesions. Interacts with UvrC in an incision complex.

Its subcellular location is the cytoplasm. The UvrABC repair system catalyzes the recognition and processing of DNA lesions. A damage recognition complex composed of 2 UvrA and 2 UvrB subunits scans DNA for abnormalities. Upon binding of the UvrA(2)B(2) complex to a putative damaged site, the DNA wraps around one UvrB monomer. DNA wrap is dependent on ATP binding by UvrB and probably causes local melting of the DNA helix, facilitating insertion of UvrB beta-hairpin between the DNA strands. Then UvrB probes one DNA strand for the presence of a lesion. If a lesion is found the UvrA subunits dissociate and the UvrB-DNA preincision complex is formed. This complex is subsequently bound by UvrC and the second UvrB is released. If no lesion is found, the DNA wraps around the other UvrB subunit that will check the other stand for damage. This Clostridium beijerinckii (strain ATCC 51743 / NCIMB 8052) (Clostridium acetobutylicum) protein is UvrABC system protein B.